The following is a 634-amino-acid chain: Chaperone protein dnaK2 (634 aa).

A Phosphothreonine; by autocatalysis modification is found at threonine 197. The span at 601–620 shows a compositional bias: low complexity; it reads SAEASANAQAGPSSSSSSSS. The tract at residues 601-634 is disordered; sequence SAEASANAQAGPSSSSSSSSGDDDVIDAEFSESK. Residues 621 to 634 show a composition bias toward acidic residues; it reads GDDDVIDAEFSESK.

The protein belongs to the heat shock protein 70 family.

In terms of biological role, acts as a chaperone. This chain is Chaperone protein dnaK2 (dnaK2), found in Synechococcus elongatus (strain ATCC 33912 / PCC 7942 / FACHB-805) (Anacystis nidulans R2).